The sequence spans 245 residues: NAD-dependent protein deacylase (245 aa).

Positions 1-237 constitute a Deacetylase sirtuin-type domain; it reads MNFPYRNIVV…PKLVEELLAH (237 aa). NAD(+) is bound at residue 13 to 32; sequence GAGISAESGIQTFRAQDGLW. Positions 57 and 60 each coordinate substrate. 94 to 97 contacts NAD(+); that stretch reads QNID. The active-site Proton acceptor is histidine 112. Cysteine 120 and cysteine 139 together coordinate Zn(2+). NAD(+) is bound by residues 179–181, 205–207, and alanine 223; these read GTS and NLE.

The protein belongs to the sirtuin family. Class III subfamily. Zn(2+) is required as a cofactor.

The protein localises to the cytoplasm. It catalyses the reaction N(6)-acetyl-L-lysyl-[protein] + NAD(+) + H2O = 2''-O-acetyl-ADP-D-ribose + nicotinamide + L-lysyl-[protein]. It carries out the reaction N(6)-succinyl-L-lysyl-[protein] + NAD(+) + H2O = 2''-O-succinyl-ADP-D-ribose + nicotinamide + L-lysyl-[protein]. Its function is as follows. NAD-dependent lysine deacetylase and desuccinylase that specifically removes acetyl and succinyl groups on target proteins. Modulates the activities of several proteins which are inactive in their acylated form. This is NAD-dependent protein deacylase from Vibrio vulnificus (strain YJ016).